We begin with the raw amino-acid sequence, 233 residues long: tRNA (guanine-N(1)-)-methyltransferase (233 aa).

S-adenosyl-L-methionine-binding positions include glycine 110 and 130-135 (IGDYVM).

It belongs to the RNA methyltransferase TrmD family. Homodimer.

The protein localises to the cytoplasm. It carries out the reaction guanosine(37) in tRNA + S-adenosyl-L-methionine = N(1)-methylguanosine(37) in tRNA + S-adenosyl-L-homocysteine + H(+). Specifically methylates guanosine-37 in various tRNAs. This Finegoldia magna (strain ATCC 29328 / DSM 20472 / WAL 2508) (Peptostreptococcus magnus) protein is tRNA (guanine-N(1)-)-methyltransferase.